The following is a 55-amino-acid chain: Large ribosomal subunit protein bL33 (55 aa).

Belongs to the bacterial ribosomal protein bL33 family.

The sequence is that of Large ribosomal subunit protein bL33 from Wigglesworthia glossinidia brevipalpis.